Consider the following 277-residue polypeptide: MLRVRILLIYLCTFVVITSTKTIEYTACNDTIIIPCTIDNPTKYIRWKLDNHNILTYNKTSKTIILSKWHTSAKLHSLSDNDVSLIIKYKDILPGTYTCEDNTGIKSTVKLVQRHTNWFNDHHTMLMFIFTGITLFLLFLEIAYTSISVVFSTNLGILQVFGCIIAMIELCGAFLFYPSMFTLRHIIGLLMMTLPSIFLIITKVFSFWLLCKLSCAVHLIIYYQLAGYILTVLGLGLSLKECVDGTLLLSGLGTIMVSEHFSLLFLVCFPSTQRDYY.

N-linked (GlcNAc...) asparagine; by host glycans are attached at residues N29 and N58. 5 helical membrane passes run 124 to 144, 156 to 176, 186 to 206, 219 to 239, and 247 to 267; these read TMLM…EIAY, GILQ…AFLF, IIGL…KVFS, LIIY…GLSL, and LLLS…LFLV.

The protein belongs to the orthopoxvirus OPG166 protein family.

The protein resides in the host membrane. Functionally, promotes, when overexpressed, the influx of extracellular Ca(2+), leading to membrane permeability and host cell necrosis. The protein is Protein OPG166 (OPG166) of Variola virus (isolate Human/India/Ind3/1967) (VARV).